A 242-amino-acid chain; its full sequence is Caffeoyl-CoA O-methyltransferase 2 (242 aa).

A substrate-binding site is contributed by Lys-16. S-adenosyl-L-methionine is bound by residues Thr-58, Glu-80, 82–83 (GV), Ser-88, Asp-106, and Ala-135. Asp-158 lines the substrate pocket. Asp-158 lines the a divalent metal cation pocket. Position 160 (Asp-160) interacts with S-adenosyl-L-methionine. The a divalent metal cation site is built by Asp-184 and Asn-185. Asn-189 serves as a coordination point for substrate.

This sequence belongs to the class I-like SAM-binding methyltransferase superfamily. Cation-dependent O-methyltransferase family. CCoAMT subfamily. A divalent metal cation is required as a cofactor. Mostly expressed in petal limbs and tubes, and, at low levels, in stems, roots and leaves.

Its subcellular location is the cytoplasm. It is found in the cytosol. The enzyme catalyses (E)-caffeoyl-CoA + S-adenosyl-L-methionine = (E)-feruloyl-CoA + S-adenosyl-L-homocysteine + H(+). The catalysed reaction is (E)-5-hydroxyferuloyl-CoA + S-adenosyl-L-methionine = (E)-sinapoyl-CoA + S-adenosyl-L-homocysteine + H(+). The protein operates within aromatic compound metabolism; phenylpropanoid biosynthesis. Functionally, involved in the production of floral volatile phenylpropanoids in flowers of fragrant cultivars (e.g. cv. Mitchell and cv. V26) from cinnamic acid, a common precursor with the anthocyanin biosynthesis pathway involved in flower pigmentation. Methylates caffeoyl-CoA to feruloyl-CoA, also able to methylate 5-hydroxyferuloyl-CoA. In Petunia hybrida (Petunia), this protein is Caffeoyl-CoA O-methyltransferase 2.